The sequence spans 152 residues: Protein Smg homolog (152 aa).

It belongs to the Smg family.

This Bordetella petrii (strain ATCC BAA-461 / DSM 12804 / CCUG 43448) protein is Protein Smg homolog.